Reading from the N-terminus, the 157-residue chain is Putative pre-16S rRNA nuclease (157 aa).

It belongs to the YqgF nuclease family.

The protein localises to the cytoplasm. Its function is as follows. Could be a nuclease involved in processing of the 5'-end of pre-16S rRNA. The polypeptide is Putative pre-16S rRNA nuclease (Anaplasma marginale (strain St. Maries)).